Reading from the N-terminus, the 131-residue chain is Profilin-2 (131 aa).

Cys-13 and Cys-115 form a disulfide bridge. The Involved in PIP2 interaction signature appears at Ala-81–Thr-97. Thr-111 is subject to Phosphothreonine.

The protein belongs to the profilin family. Occurs in many kinds of cells as a complex with monomeric actin in a 1:1 ratio. Phosphorylated by MAP kinases.

The protein resides in the cytoplasm. The protein localises to the cytoskeleton. Functionally, binds to actin and affects the structure of the cytoskeleton. At high concentrations, profilin prevents the polymerization of actin, whereas it enhances it at low concentrations. By binding to PIP2, it inhibits the formation of IP3 and DG. The polypeptide is Profilin-2 (PRO2) (Phleum pratense (Common timothy)).